The following is a 427-amino-acid chain: Serine hydroxymethyltransferase (427 aa).

Residues L127 and 131 to 133 (GHL) each bind (6S)-5,6,7,8-tetrahydrofolate. An N6-(pyridoxal phosphate)lysine modification is found at K236.

It belongs to the SHMT family. Homodimer. It depends on pyridoxal 5'-phosphate as a cofactor.

It localises to the cytoplasm. It catalyses the reaction (6R)-5,10-methylene-5,6,7,8-tetrahydrofolate + glycine + H2O = (6S)-5,6,7,8-tetrahydrofolate + L-serine. It participates in one-carbon metabolism; tetrahydrofolate interconversion. Its pathway is amino-acid biosynthesis; glycine biosynthesis; glycine from L-serine: step 1/1. Its function is as follows. Catalyzes the reversible interconversion of serine and glycine with tetrahydrofolate (THF) serving as the one-carbon carrier. This reaction serves as the major source of one-carbon groups required for the biosynthesis of purines, thymidylate, methionine, and other important biomolecules. Also exhibits THF-independent aldolase activity toward beta-hydroxyamino acids, producing glycine and aldehydes, via a retro-aldol mechanism. This is Serine hydroxymethyltransferase from Paramagnetospirillum magneticum (strain ATCC 700264 / AMB-1) (Magnetospirillum magneticum).